Consider the following 830-residue polypeptide: uncharacterized protein (830 aa).

Disordered regions lie at residues methionine 1–cysteine 28, arginine 70–alanine 147, and alanine 186–leucine 210. The span at asparagine 10–isoleucine 27 shows a compositional bias: polar residues. Low complexity-rich tracts occupy residues glutamine 100 to serine 130 and alanine 186 to serine 199. Polar residues predominate over residues glutamate 200–leucine 210. 10 helical membrane-spanning segments follow: residues tryptophan 505–glycine 525, aspartate 529–proline 549, phenylalanine 551–arginine 571, phenylalanine 584–phenylalanine 604, methionine 622–leucine 642, isoleucine 659–leucine 679, isoleucine 691–glycine 711, isoleucine 715–isoleucine 735, phenylalanine 740–glycine 760, and isoleucine 802–glycine 822.

Belongs to the ThrE exporter (TC 2.A.79) family.

It is found in the cell membrane. The protein resides in the cell tip. This is an uncharacterized protein from Schizosaccharomyces pombe (strain 972 / ATCC 24843) (Fission yeast).